The following is a 380-amino-acid chain: D-threo-3-hydroxyaspartate dehydratase (380 aa).

Residue Lys-43 is modified to N6-(pyridoxal phosphate)lysine.

Belongs to the DSD1 family. As to quaternary structure, monomer. Pyridoxal 5'-phosphate serves as cofactor. It depends on Mn(2+) as a cofactor. Co(2+) is required as a cofactor. Requires Ni(2+) as cofactor.

It catalyses the reaction (3R)-3-hydroxy-D-aspartate = oxaloacetate + NH4(+). Its activity is regulated as follows. Strongly inhibited by hydroxylamine. Modestly inhibited by EDTA. Functionally, catalyzes the deamination of D-threo-3-hydroxyaspartate (D-THA). Also exhibits dehydratase activity towards L-threo-3-hydroxyaspartate (L-THA), L-erythro-3-hydroxyaspartate (L-EHA) and D-serine. The polypeptide is D-threo-3-hydroxyaspartate dehydratase (dthadh) (Delftia sp. (strain HT23)).